The following is a 424-amino-acid chain: Phosphomethylpyrimidine synthase (424 aa).

Substrate-binding positions include Met-94, Tyr-123, His-162, 184–186, 225–228, and Glu-264; these read SRG and NGMR. His-268 serves as a coordination point for Zn(2+). Residue Tyr-291 participates in substrate binding. His-332 provides a ligand contact to Zn(2+). Residues Cys-406, Cys-409, and Cys-413 each contribute to the [4Fe-4S] cluster site.

The protein belongs to the ThiC family. [4Fe-4S] cluster serves as cofactor.

It carries out the reaction 5-amino-1-(5-phospho-beta-D-ribosyl)imidazole + S-adenosyl-L-methionine = 4-amino-2-methyl-5-(phosphooxymethyl)pyrimidine + CO + 5'-deoxyadenosine + formate + L-methionine + 3 H(+). It functions in the pathway cofactor biosynthesis; thiamine diphosphate biosynthesis. Its function is as follows. Catalyzes the synthesis of the hydroxymethylpyrimidine phosphate (HMP-P) moiety of thiamine from aminoimidazole ribotide (AIR) in a radical S-adenosyl-L-methionine (SAM)-dependent reaction. This is Phosphomethylpyrimidine synthase from Methanoculleus marisnigri (strain ATCC 35101 / DSM 1498 / JR1).